Consider the following 240-residue polypeptide: 1-(5-phosphoribosyl)-5-[(5-phosphoribosylamino)methylideneamino] imidazole-4-carboxamide isomerase 2 (240 aa).

The active-site Proton acceptor is the D8. Catalysis depends on D129, which acts as the Proton donor.

Belongs to the HisA/HisF family.

The protein resides in the cytoplasm. The catalysed reaction is 1-(5-phospho-beta-D-ribosyl)-5-[(5-phospho-beta-D-ribosylamino)methylideneamino]imidazole-4-carboxamide = 5-[(5-phospho-1-deoxy-D-ribulos-1-ylimino)methylamino]-1-(5-phospho-beta-D-ribosyl)imidazole-4-carboxamide. Its pathway is amino-acid biosynthesis; L-histidine biosynthesis; L-histidine from 5-phospho-alpha-D-ribose 1-diphosphate: step 4/9. The polypeptide is 1-(5-phosphoribosyl)-5-[(5-phosphoribosylamino)methylideneamino] imidazole-4-carboxamide isomerase 2 (Ruegeria sp. (strain TM1040) (Silicibacter sp.)).